A 407-amino-acid chain; its full sequence is Tryptophan synthase beta chain (407 aa).

Position 91 is an N6-(pyridoxal phosphate)lysine (Lys-91).

This sequence belongs to the TrpB family. Tetramer of two alpha and two beta chains. The cofactor is pyridoxal 5'-phosphate.

It catalyses the reaction (1S,2R)-1-C-(indol-3-yl)glycerol 3-phosphate + L-serine = D-glyceraldehyde 3-phosphate + L-tryptophan + H2O. It participates in amino-acid biosynthesis; L-tryptophan biosynthesis; L-tryptophan from chorismate: step 5/5. Functionally, the beta subunit is responsible for the synthesis of L-tryptophan from indole and L-serine. The sequence is that of Tryptophan synthase beta chain from Streptococcus pneumoniae (strain P1031).